The following is a 160-amino-acid chain: Cyclic pyranopterin monophosphate synthase (160 aa).

Substrate contacts are provided by residues 77-79 (MCH) and 114-115 (ME). The active site involves D129.

The protein belongs to the MoaC family. As to quaternary structure, homohexamer; trimer of dimers.

The enzyme catalyses (8S)-3',8-cyclo-7,8-dihydroguanosine 5'-triphosphate = cyclic pyranopterin phosphate + diphosphate. It participates in cofactor biosynthesis; molybdopterin biosynthesis. Catalyzes the conversion of (8S)-3',8-cyclo-7,8-dihydroguanosine 5'-triphosphate to cyclic pyranopterin monophosphate (cPMP). The sequence is that of Cyclic pyranopterin monophosphate synthase from Listeria welshimeri serovar 6b (strain ATCC 35897 / DSM 20650 / CCUG 15529 / CIP 8149 / NCTC 11857 / SLCC 5334 / V8).